A 344-amino-acid polypeptide reads, in one-letter code: D-arabinose dehydrogenase [NAD(P)+] heavy chain (344 aa).

Tyr71 functions as the Proton donor in the catalytic mechanism. His131 is a binding site for substrate. Thr151 is subject to Phosphothreonine. 241–295 (SPLGSHGAPNLKIPLVKKLAEKYNVTGNDLLISYHIRQGTIVIPRSLNPVRISSS) is a binding site for NADP(+).

The protein belongs to the aldo/keto reductase family. In terms of assembly, heterodimer of a heavy chain and a light chain.

It localises to the cytoplasm. The catalysed reaction is D-arabinose + NADP(+) = D-arabinono-1,4-lactone + NADPH + H(+). The enzyme catalyses D-arabinose + NAD(+) = D-arabinono-1,4-lactone + NADH + H(+). Catalyzes the oxidation of D-arabinose, L-xylose, L-fucose and L-galactose in the presence of NADP(+). This Saccharomyces cerevisiae (strain ATCC 204508 / S288c) (Baker's yeast) protein is D-arabinose dehydrogenase [NAD(P)+] heavy chain (ARA1).